The primary structure comprises 485 residues: Glutamyl-tRNA(Gln) amidotransferase subunit A (485 aa).

Residues Lys-78 and Ser-153 each act as charge relay system in the active site. Catalysis depends on Ser-177, which acts as the Acyl-ester intermediate.

The protein belongs to the amidase family. GatA subfamily. As to quaternary structure, heterotrimer of A, B and C subunits.

It carries out the reaction L-glutamyl-tRNA(Gln) + L-glutamine + ATP + H2O = L-glutaminyl-tRNA(Gln) + L-glutamate + ADP + phosphate + H(+). Allows the formation of correctly charged Gln-tRNA(Gln) through the transamidation of misacylated Glu-tRNA(Gln) in organisms which lack glutaminyl-tRNA synthetase. The reaction takes place in the presence of glutamine and ATP through an activated gamma-phospho-Glu-tRNA(Gln). The protein is Glutamyl-tRNA(Gln) amidotransferase subunit A of Syntrophus aciditrophicus (strain SB).